The following is a 129-amino-acid chain: Small ribosomal subunit protein uS11 (129 aa).

Belongs to the universal ribosomal protein uS11 family. As to quaternary structure, part of the 30S ribosomal subunit. Interacts with proteins S7 and S18. Binds to IF-3.

Located on the platform of the 30S subunit, it bridges several disparate RNA helices of the 16S rRNA. Forms part of the Shine-Dalgarno cleft in the 70S ribosome. In Vibrio campbellii (strain ATCC BAA-1116), this protein is Small ribosomal subunit protein uS11.